The following is a 509-amino-acid chain: 3-ketoacyl-CoA synthase 11 (509 aa).

2 helical membrane-spanning segments follow: residues 36-56 (LITHGMYLFLSPLVLVIAAQI) and 75-95 (LISVVVCSMLLVFLMTIYFMT). Residues 92–381 (YFMTRPRPVY…FFATLVGRKL (290 aa)) enclose the FAE domain. Active-site residues include Cys-236, His-315, His-399, His-403, and Asn-436.

This sequence belongs to the thiolase-like superfamily. Chalcone/stilbene synthases family. As to expression, only expressed in guard cells. Expressed in siliques, flowers, leaves, stems, roots and seedlings.

The protein resides in the membrane. It catalyses the reaction a very-long-chain acyl-CoA + malonyl-CoA + H(+) = a very-long-chain 3-oxoacyl-CoA + CO2 + CoA. Its pathway is lipid metabolism; fatty acid biosynthesis. Active on both saturated and mono-unsaturated acyl chains C16 to C20. The sequence is that of 3-ketoacyl-CoA synthase 11 from Arabidopsis thaliana (Mouse-ear cress).